Reading from the N-terminus, the 180-residue chain is Large ribosomal subunit protein uL5 (180 aa).

This sequence belongs to the universal ribosomal protein uL5 family. Part of the 50S ribosomal subunit; part of the 5S rRNA/L5/L18/L25 subcomplex. Contacts the 5S rRNA and the P site tRNA. Forms a bridge to the 30S subunit in the 70S ribosome.

Its function is as follows. This is one of the proteins that bind and probably mediate the attachment of the 5S RNA into the large ribosomal subunit, where it forms part of the central protuberance. In the 70S ribosome it contacts protein S13 of the 30S subunit (bridge B1b), connecting the 2 subunits; this bridge is implicated in subunit movement. Contacts the P site tRNA; the 5S rRNA and some of its associated proteins might help stabilize positioning of ribosome-bound tRNAs. This Streptococcus thermophilus (strain ATCC BAA-491 / LMD-9) protein is Large ribosomal subunit protein uL5.